Reading from the N-terminus, the 346-residue chain is Protein FAF1 (346 aa).

Disordered stretches follow at residues 22–120 (QFGS…LRSG) and 323–346 (KRDI…KSRR). Residues 31–65 (FEDKTKNIRTEVDTRDSSGDEIDNSDHGSDFKDGT) are compositionally biased toward basic and acidic residues. The segment covering 72–85 (SDEDSGNETAEENN) has biased composition (acidic residues).

Interacts with KRR1.

It is found in the nucleus. The protein localises to the nucleolus. Its function is as follows. Required for pre-rRNA processing and 40S ribosomal subunit assembly. Seems to act in the processing of 35S rRNA at the A(0), A(1), and A(2) cleavage sites. In Saccharomyces cerevisiae (strain ATCC 204508 / S288c) (Baker's yeast), this protein is Protein FAF1 (FAF1).